A 594-amino-acid chain; its full sequence is Acyl-coenzyme A thioesterase 11 (594 aa).

The transit peptide at Met1–Arg20 directs the protein to the mitochondrion. Phosphoserine occurs at positions 15 and 25. Residues Arg20–Tyr43 form a disordered region. The HotDog ACOT-type 1 domain occupies Asn45–Leu157. CoA-binding positions include Thr93–Ser95, Asn122–Ser124, Arg183, and His272–Arg274. The 114-residue stretch at Glu217–Asp330 folds into the HotDog ACOT-type 2 domain. Residues Lys370–Asp582 enclose the START domain.

It localises to the mitochondrion matrix. The protein localises to the cytoplasm. It carries out the reaction hexadecanoyl-CoA + H2O = hexadecanoate + CoA + H(+). It catalyses the reaction tetradecanoyl-CoA + H2O = tetradecanoate + CoA + H(+). The enzyme catalyses dodecanoyl-CoA + H2O = dodecanoate + CoA + H(+). The catalysed reaction is butanoyl-CoA + H2O = butanoate + CoA + H(+). It participates in lipid metabolism; fatty acid metabolism. In terms of biological role, has an acyl-CoA thioesterase activity with a preference for the long chain fatty acyl-CoA thioesters hexadecanoyl-CoA/palmitoyl-CoA and tetradecanoyl-CoA/myristoyl-CoA which are the main substrates in the mitochondrial beta-oxidation pathway. The sequence is that of Acyl-coenzyme A thioesterase 11 (Acot11) from Mus musculus (Mouse).